Reading from the N-terminus, the 112-residue chain is FK506-binding protein 1A (112 aa).

One can recognise a PPIase FKBP-type domain in the interval 20 to 108 (GDFVTIHYTG…IFEVELLGIN (89 aa)).

The protein belongs to the FKBP-type PPIase family. FKBP1 subfamily.

Its subcellular location is the cytoplasm. The catalysed reaction is [protein]-peptidylproline (omega=180) = [protein]-peptidylproline (omega=0). With respect to regulation, inhibited by both FK506 and rapamycin. Its function is as follows. PPIases accelerate the folding of proteins. It catalyzes the cis-trans isomerization of proline imidic peptide bonds in oligopeptides. In Aspergillus fumigatus (strain ATCC MYA-4609 / CBS 101355 / FGSC A1100 / Af293) (Neosartorya fumigata), this protein is FK506-binding protein 1A (fpr1A).